The following is a 107-amino-acid chain: Integration host factor subunit beta (107 aa).

Positions arginine 56–arginine 107 are disordered. The span at proline 82–aspartate 101 shows a compositional bias: basic and acidic residues.

This sequence belongs to the bacterial histone-like protein family. Heterodimer of an alpha and a beta chain.

In terms of biological role, this protein is one of the two subunits of integration host factor, a specific DNA-binding protein that functions in genetic recombination as well as in transcriptional and translational control. The chain is Integration host factor subunit beta from Burkholderia vietnamiensis (strain G4 / LMG 22486) (Burkholderia cepacia (strain R1808)).